The sequence spans 276 residues: Glutamate racemase (276 aa).

Substrate-binding positions include 10–11 and 42–43; these read DS and YG. Cys-73 (proton donor/acceptor) is an active-site residue. 74–75 serves as a coordination point for substrate; that stretch reads NS. Cys-183 acts as the Proton donor/acceptor in catalysis. Position 184–185 (184–185) interacts with substrate; that stretch reads TH.

The protein belongs to the aspartate/glutamate racemases family.

It catalyses the reaction L-glutamate = D-glutamate. It functions in the pathway cell wall biogenesis; peptidoglycan biosynthesis. In terms of biological role, provides the (R)-glutamate required for cell wall biosynthesis. The polypeptide is Glutamate racemase (Parafrankia sp. (strain EAN1pec)).